A 144-amino-acid polypeptide reads, in one-letter code: 3-hydroxyacyl-[acyl-carrier-protein] dehydratase FabZ (144 aa).

The active site involves histidine 48.

Belongs to the thioester dehydratase family. FabZ subfamily.

The protein localises to the cytoplasm. It carries out the reaction a (3R)-hydroxyacyl-[ACP] = a (2E)-enoyl-[ACP] + H2O. In terms of biological role, involved in unsaturated fatty acids biosynthesis. Catalyzes the dehydration of short chain beta-hydroxyacyl-ACPs and long chain saturated and unsaturated beta-hydroxyacyl-ACPs. This Chloroflexus aggregans (strain MD-66 / DSM 9485) protein is 3-hydroxyacyl-[acyl-carrier-protein] dehydratase FabZ.